The following is a 144-amino-acid chain: Small polypeptide DEVIL 15 (144 aa).

Asparagine 8 carries N-linked (GlcNAc...) asparagine glycosylation. The segment at 22–63 is disordered; it reads SSSSKPFFTRSFSTKTSSSPSSKSHFTRSFSTKPSSSSSSSD. Residues 104–120 form a helical membrane-spanning segment; sequence ILSKKGASVTGKCFKVA. The tract at residues 111–142 is required for DVL/RTFL small polypeptide activity; the sequence is SVTGKCFKVAKEHKSRFYIIKRCVLMLVCWHK.

Belongs to the DVL/RTFL small polypeptides family.

It is found in the cell membrane. Functionally, small polypeptide acting as a regulatory molecule which coordinates cellular responses required for differentiation, growth and development, probably by restricting polar cell proliferation in lateral organs and coordinating socket cell recruitment and differentiation at trichome sites. In Arabidopsis thaliana (Mouse-ear cress), this protein is Small polypeptide DEVIL 15.